A 189-amino-acid chain; its full sequence is Gluconokinase (189 aa).

16-23 provides a ligand contact to ATP; that stretch reads GVSGAGKS.

This sequence belongs to the gluconokinase GntK/GntV family. Monomer.

It catalyses the reaction D-gluconate + ATP = 6-phospho-D-gluconate + ADP + H(+). It participates in carbohydrate acid metabolism; D-gluconate degradation. Its function is as follows. Phosphorylates gluconate to 6-phosphogluconate. This is Gluconokinase from Arabidopsis thaliana (Mouse-ear cress).